A 148-amino-acid polypeptide reads, in one-letter code: 3-dehydroquinate dehydratase (148 aa).

Catalysis depends on Y23, which acts as the Proton acceptor. Residues N75, H81, and D88 each coordinate substrate. The active-site Proton donor is the H101. Substrate contacts are provided by residues 102 to 103 (LS) and R112.

Belongs to the type-II 3-dehydroquinase family. In terms of assembly, homododecamer.

The enzyme catalyses 3-dehydroquinate = 3-dehydroshikimate + H2O. Its pathway is metabolic intermediate biosynthesis; chorismate biosynthesis; chorismate from D-erythrose 4-phosphate and phosphoenolpyruvate: step 3/7. Functionally, catalyzes a trans-dehydration via an enolate intermediate. This chain is 3-dehydroquinate dehydratase, found in Xylella fastidiosa (strain M23).